A 312-amino-acid polypeptide reads, in one-letter code: Phospholipid phosphatase 3 (312 aa).

Over 1–33 (MQSYKYDKAIVPESKNGGSPALNNNPRKGGSKR) the chain is Cytoplasmic. Serine 19 is modified (phosphoserine). The chain crosses the membrane as a helical span at residues 34 to 54 (VLLICLDLFCLFMAALPFLII). At 55–85 (ETSTIKPYRRGFYCNDESIKYPLKVSETIND) the chain is on the extracellular side. The chain crosses the membrane as a helical span at residues 86–106 (AVLCAVGIVIAILRIITGEFY). The Cytoplasmic portion of the chain corresponds to 107-123 (RIYYLKEKSRSTIQNPY). Residues 109-110 (YY) carry the Dityrosine basolateral targeting motif motif. A helical membrane pass occupies residues 124–144 (VAALYKQVGCFLFGCAISQSF). Residues 145-194 (TDIAKVSIGRLRPHFLSVCDPDFSQINCSEGYIQNYRCRGEDSKVQEARK) are Extracellular-facing. The phosphatase sequence motif I stretch occupies residues 149–157 (KVSIGRLRP). Asparagine 171 is a glycosylation site (N-linked (GlcNAc...) asparagine). An Integrin-binding motif motif is present at residues 183-185 (RGE). The helical transmembrane segment at 195 to 215 (SFFSGHASFSMFTMLYLVLYL) threads the bilayer. A phosphatase sequence motif II region spans residues 197–200 (FSGH). Catalysis depends on histidine 200, which acts as the Proton donors. The Cytoplasmic portion of the chain corresponds to 216 to 226 (QARFTWRGARL). The chain crosses the membrane as a helical span at residues 227-244 (LRPLLQFTLLMMAFYTGL). The phosphatase sequence motif III stretch occupies residues 245 to 256 (SRVSDYKHHPSD). The Extracellular portion of the chain corresponds to 245 to 258 (SRVSDYKHHPSDVL). Histidine 252 acts as the Nucleophile in catalysis. A helical transmembrane segment spans residues 259–279 (AGFAQGALVACCIVFFVSDLF). Residues 276–312 (SDLFKTKTTLSLPAPAIRREILSPVDIMDRSNHHNMV) form a mediates interaction with CTNND1 region. At 280 to 312 (KTKTTLSLPAPAIRREILSPVDIMDRSNHHNMV) the chain is on the cytoplasmic side.

Belongs to the PA-phosphatase related phosphoesterase family. In terms of assembly, forms functional homodimers and homooligomers that are not required for substrate recognition and catalytic activity. Can also form heterooligomers with other PLPP2 and PLPP3. Interacts with CTNND1; negatively regulates the PLPP3-mediated stabilization of beta-catenin/CTNNB1. Post-translationally, N-glycosylated. Contains high-mannose oligosaccharides. In terms of tissue distribution, detected in epithelial cells of intestinal mucosa, lung, liver and brain.

The protein localises to the cell membrane. It is found in the basolateral cell membrane. The protein resides in the endoplasmic reticulum membrane. Its subcellular location is the endoplasmic reticulum-Golgi intermediate compartment membrane. It localises to the golgi apparatus membrane. The protein localises to the golgi apparatus. It is found in the trans-Golgi network membrane. The protein resides in the membrane raft. The enzyme catalyses a 1,2-diacyl-sn-glycero-3-phosphate + H2O = a 1,2-diacyl-sn-glycerol + phosphate. It catalyses the reaction 1,2-dihexadecanoyl-sn-glycero-3-phosphate + H2O = 1,2-dihexadecanoyl-sn-glycerol + phosphate. It carries out the reaction 1,2-di-(9Z-octadecenoyl)-sn-glycero-3-phosphate + H2O = 1,2-di-(9Z-octadecenoyl)-sn-glycerol + phosphate. The catalysed reaction is a monoacyl-sn-glycero-3-phosphate + H2O = a monoacylglycerol + phosphate. The enzyme catalyses (9Z)-octadecenoyl-sn-glycero-3-phosphate + H2O = (9Z-octadecenoyl)-glycerol + phosphate. It catalyses the reaction sphing-4-enine 1-phosphate + H2O = sphing-4-enine + phosphate. It carries out the reaction an N-acylsphing-4-enine 1-phosphate + H2O = an N-acylsphing-4-enine + phosphate. The catalysed reaction is N-(octanoyl)-sphing-4-enine-1-phosphate + H2O = N-octanoylsphing-4-enine + phosphate. The enzyme catalyses N-(9Z-octadecenoyl)-ethanolamine phosphate + H2O = N-(9Z-octadecenoyl) ethanolamine + phosphate. It participates in lipid metabolism; phospholipid metabolism. With respect to regulation, magnesium-independent phospholipid phosphatase. Insensitive to N-ethylmaleimide. Inhibited by sphingosine, zinc ions and modestly by propanolol. Its function is as follows. Magnesium-independent phospholipid phosphatase of the plasma membrane that catalyzes the dephosphorylation of a variety of glycerolipid and sphingolipid phosphate esters including phosphatidate/PA, lysophosphatidate/LPA, diacylglycerol pyrophosphate/DGPP, sphingosine 1-phosphate/S1P and ceramide 1-phosphate/C1P. Also acts on N-oleoyl ethanolamine phosphate/N-(9Z-octadecenoyl)-ethanolamine phosphate, a potential physiological compound. Has both an extracellular and an intracellular phosphatase activity, allowing the hydrolysis and the cellular uptake of these bioactive lipid mediators from the milieu, regulating signal transduction in different cellular processes. Through the dephosphorylation of extracellular sphingosine-1-phosphate and the regulation of its extra- and intracellular availability, plays a role in vascular homeostasis, regulating endothelial cell migration, adhesion, survival, proliferation and the production of pro-inflammatory cytokines. By maintaining the appropriate levels of this lipid in the cerebellum, also ensure its proper development and function. Through its intracellular lipid phosphatase activity may act in early compartments of the secretory pathway, regulating the formation of Golgi to endoplasmic reticulum retrograde transport carriers. Independently of this phosphatase activity may also function in the Wnt signaling pathway and the stabilization of beta-catenin/CTNNB1, thereby regulating cell proliferation, migration and differentiation in angiogenesis or yet in tumor growth. Also plays a role in integrin-mediated cell-cell adhesion in angiogenesis. The protein is Phospholipid phosphatase 3 of Rattus norvegicus (Rat).